A 118-amino-acid chain; its full sequence is Ribonuclease P protein component (118 aa).

This sequence belongs to the RnpA family. In terms of assembly, consists of a catalytic RNA component (M1 or rnpB) and a protein subunit.

The enzyme catalyses Endonucleolytic cleavage of RNA, removing 5'-extranucleotides from tRNA precursor.. RNaseP catalyzes the removal of the 5'-leader sequence from pre-tRNA to produce the mature 5'-terminus. It can also cleave other RNA substrates such as 4.5S RNA. The protein component plays an auxiliary but essential role in vivo by binding to the 5'-leader sequence and broadening the substrate specificity of the ribozyme. The sequence is that of Ribonuclease P protein component from Shewanella sp. (strain ANA-3).